Consider the following 524-residue polypeptide: Peptide chain release factor 3 (524 aa).

In terms of domain architecture, tr-type G spans 9–275; it reads QRRRTFAIIS…AVVELSPPPL (267 aa). GTP is bound by residues 18–25, 86–90, and 140–143; these read SHPDAGKT, DTPGH, and NKLD.

This sequence belongs to the TRAFAC class translation factor GTPase superfamily. Classic translation factor GTPase family. PrfC subfamily.

Its subcellular location is the cytoplasm. Functionally, increases the formation of ribosomal termination complexes and stimulates activities of RF-1 and RF-2. It binds guanine nucleotides and has strong preference for UGA stop codons. It may interact directly with the ribosome. The stimulation of RF-1 and RF-2 is significantly reduced by GTP and GDP, but not by GMP. The polypeptide is Peptide chain release factor 3 (Methylobacillus flagellatus (strain ATCC 51484 / DSM 6875 / VKM B-1610 / KT)).